Reading from the N-terminus, the 303-residue chain is Thioesterase poxG (303 aa).

The protein belongs to the lcsJ thioesterase family.

It functions in the pathway secondary metabolite biosynthesis. Its function is as follows. Thioesterase; part of the gene cluster that mediates the biosynthesis of oxaleimides, cytotoxic compounds containing an unusual disubstituted succinimide moiety. The first step of the pathway is provided by the HR-PKS poxF that serves in a new mode of collaborative biosynthesis with the PKS-NRPS poxE, by providing the olefin containing amino acid substrate via the synthesis of an ACP-bound dec-4-enoate. The cytochrome P450 monooxygenase poxM-catalyzed oxidation at the alpha-position creates the enzyme-bound 2-hydroxydec-4-enoyl-ACP thioester, which may be prone to spontaneous hydrolysis to yield 2-hydroxydec-4-enoic acid due to increased electrophilicity of the carbonyl. 2-hydroxydec-4-enoic acid can then be further oxidized by poxM to yield the alpha-ketoacid 2-oxodec-4-enoicacid, which is reductively aminated by the aminotransferase poxL to yield (S,E)-2-aminodec-4-enoic acid. The Hybrid PKS-NRPS synthetase poxE then performs condensation between the octaketide product of its PKS modules and the amino group of (S,E)-2-aminodec-4-enoic acid which is activated and incorporated by the adenylation domain. The resulting aminoacyl product can be cyclized by the Diels-Alderase PoxQ and reductively released by the reductive (R) domain of poxE to yield an aldehyde intermediate. The released aldehyde is then substrate for a Knoevenagel condensation by the hydrolyase poxO followed by an oxidation at the 5-position of the pyrrolidone ring. The presence of the olefin from the amino acid building block allows for migration of the substituted allyl group to occur. This allylic transposition reaction takes place in a conjugate addition, semipinacol-like fashion to yield a succinimide intermediate. Iterative two-electron oxidations of the C7 methyl of the succinimide intermediate to the carboxylic acid can be catalyzed by one of two remaining cytochrome P450 monooxygenasess poxC or poxD to yield oxaleimide A. Subsequent oxidation yields the maleimide scaffold oxaleimide I. Both oxaleimide A and oxaleimide I can undergo oxidative modifications in the decalin ring to yield the series of products oxaleimides B to H. The sequence is that of Thioesterase poxG from Penicillium oxalicum.